The primary structure comprises 364 residues: UDP-N-acetylglucosamine--N-acetylmuramyl-(pentapeptide) pyrophosphoryl-undecaprenol N-acetylglucosamine transferase (364 aa).

Residues 14–16 (TGG), Asn-126, Arg-163, Ser-190, Ile-246, 265–270 (ALTVSE), and Gln-291 each bind UDP-N-acetyl-alpha-D-glucosamine.

Belongs to the glycosyltransferase 28 family. MurG subfamily.

Its subcellular location is the cell inner membrane. It carries out the reaction di-trans,octa-cis-undecaprenyl diphospho-N-acetyl-alpha-D-muramoyl-L-alanyl-D-glutamyl-meso-2,6-diaminopimeloyl-D-alanyl-D-alanine + UDP-N-acetyl-alpha-D-glucosamine = di-trans,octa-cis-undecaprenyl diphospho-[N-acetyl-alpha-D-glucosaminyl-(1-&gt;4)]-N-acetyl-alpha-D-muramoyl-L-alanyl-D-glutamyl-meso-2,6-diaminopimeloyl-D-alanyl-D-alanine + UDP + H(+). Its pathway is cell wall biogenesis; peptidoglycan biosynthesis. In terms of biological role, cell wall formation. Catalyzes the transfer of a GlcNAc subunit on undecaprenyl-pyrophosphoryl-MurNAc-pentapeptide (lipid intermediate I) to form undecaprenyl-pyrophosphoryl-MurNAc-(pentapeptide)GlcNAc (lipid intermediate II). The protein is UDP-N-acetylglucosamine--N-acetylmuramyl-(pentapeptide) pyrophosphoryl-undecaprenol N-acetylglucosamine transferase of Shewanella loihica (strain ATCC BAA-1088 / PV-4).